The following is a 366-amino-acid chain: Nucleoporin SEH1 (366 aa).

WD repeat units lie at residues 18–57 (AHRD…NWRR), 63–104 (CHGG…TEKD), 111–152 (QWIR…RIYE), 161–209 (RWNL…VIYE), 226–267 (DMPC…TAIL), and 290–329 (GDQR…QWVK).

This sequence belongs to the WD repeat SEC13 family. Component of the nuclear pore complex (NPC). Probably part of the GATOR complex.

The protein localises to the nucleus. The protein resides in the nuclear pore complex. It is found in the lysosome membrane. Probable component of the nuclear pore complex (NPC) which is involved in the trafficking of macromolecules between the cytoplasm and nucleus. In terms of biological role, as a component of the GATOR complex may function in the amino acid-sensing branch of the TORC1 signaling pathway. The chain is Nucleoporin SEH1 from Caenorhabditis briggsae.